The sequence spans 382 residues: MAEQRPLTIALVAGETSGDILGAGLIRALKARVPNARFVGVAGPRMQAEGCEAWYEMEELAVMGIVEVLGRLRRLLHIRADLTRRFTELQPDVFVGIDAPDFNITLEGNLKKQGIKTIHYVSPSVWAWRQKRVFKIGRSTNMVLAFLPFEKAFYDKFNVPCRFIGHTMADAMPLDPDKNAARDVLGISHDAHCLALLPGSRGAEVEMLSADFLKTAQLLRQTYPDLEVVVPLVNAKRREQFERIKAEVAPELSVHLLDGMGREAMVASDAALLASGTAALECMLAKCPMVVGYRMKPFTFWLAKRLVKTDYVSLPNLLAGRELVKELLQEECEPHALAEALLPLLANGKTSHAMHDTFRELHQQIRCNADEQAADAVLELAQ.

It belongs to the LpxB family.

It catalyses the reaction 2-N,3-O-bis[(3R)-3-hydroxytetradecanoyl]-alpha-D-glucosaminyl 1-phosphate + UDP-2-N,3-O-bis[(3R)-3-hydroxytetradecanoyl]-alpha-D-glucosamine = lipid A disaccharide (E. coli) + UDP + H(+). The enzyme catalyses a lipid X + a UDP-2-N,3-O-bis[(3R)-3-hydroxyacyl]-alpha-D-glucosamine = a lipid A disaccharide + UDP + H(+). It participates in glycolipid biosynthesis; lipid IV(A) biosynthesis; lipid IV(A) from (3R)-3-hydroxytetradecanoyl-[acyl-carrier-protein] and UDP-N-acetyl-alpha-D-glucosamine: step 5/6. Condensation of UDP-2,3-diacylglucosamine and 2,3-diacylglucosamine-1-phosphate to form lipid A disaccharide, a precursor of lipid A, a phosphorylated glycolipid that anchors the lipopolysaccharide to the outer membrane of the cell. The polypeptide is Lipid-A-disaccharide synthase (Citrobacter koseri (strain ATCC BAA-895 / CDC 4225-83 / SGSC4696)).